Reading from the N-terminus, the 1314-residue chain is MDEELLLTRILAGIEGGDDESDYHELVTDLKSLLDTDDDEILNRFYGSLSSMASSFLRCISAAMDSPVESGRLAILASDAYLSLLLSTNCPVFTFFSPIAFLSLLGSIRRYLKRRDDSAGQGSNSQREKGNKKKRGRGKRNLGYEDGEETEEGGFDAKLMFIVLEKLGSVLSFVHLDRFPDSLKSLVQTVSEIPLLALEHSGVLNYDRLMEMCGKILGGVLNSDHGDMALTAAEISKSLTPLLLMGKHQARSFALGFVSRKLMSLAKDNPELKKVVSNLPKFLVHKAPEKAEPRGFAVEAVLEIVKAMEVEGQSEFVDFVMKMCQGKSNFRVLAVDIIPLLISSLGNPLGDISSENGLKDSWGLGCIDALVQRCSDTSALIRARALSNLAQVVEFLSGDERSRSILKQALGFNGETSEGKGAVTDLLKKRCVDEKAAVRRAALLLVTKLTSLMGGCFDGSILKTMGTSCSDPLISIRKAAVSAISEAFRICTDEIVTTEWLHSVPRMIMDNETSIQEECENVFHELVLERILRAGNVLSPDSASLPNNRNTTSKDLDRDIEALFPEGVLVLLRELCNSEVSPWVTKICGSLGKKKRLKPRVALALQCIIKESESLWLSRSMPINRWTAPAGAWFLLSEVSVYLSKSVEWEFLHHHWQLLDKNDVQGLDEQGDEQGVECNSSTWAGDRVCLLQTISNVSLQLPAEPAADLADNLLKKIENFNLHSAEVDAHVKALKTLCKKKASTSEEADMLVKKWVEQVSLKASKVTEKYIEGVSSHNHSFVTPATLGSRRSKRLDTVSKKLSKAVTAVYTIGSCVIIYPSADTTKIVPFLHTVITSGNSDSKLKNKLPQANVCLKQKAPLLYSQSWLTMAKMCLADGKLAKRYLPLFAQELEKSDCAALRNNLVVAMTDFCVHYTAMIECYIPKITKRLRDPCEVVRRQTFILLSRLLQRDYVKWRGVLFLRFLLSLVDESEKIRRLADFLFGSILKVKAPLLAYNSFVEAIYVLNDCHAHTGHSNPDSKQSRTKDQVFSIRGNDERARSKRMQIYVTLLKQMAPEHLLATFAKLCAEILAAASDGMLNIEDVTGQSVLQDAFQILACKEIRLSVSRGASSETADIEEEGGDAATAKGRAITHAVRKGLIQNTIPIFIELKRLLESKNSPLTGSLMDCLRVLLKDYKNEIEEMLVADKQLQKELVYDMQKHEAAKARSMANQGVACGTSHRNGEPEASAASEENVRDSGLESRVVSAAADVVAAKAARSVLREVNGGAATPPLSAMSVPKLRSSRGVSQSGRPSADVLESLRRRPTFMSDDES.

HEAT repeat units follow at residues glutamate 20–arginine 58, proline 98–glycine 136, lysine 184–asparagine 222, threonine 231–lysine 267, asparagine 269–valine 310, arginine 331–aspartate 360, serine 361–glycine 398, serine 417–glycine 455, phenylalanine 457–aspartate 493, and glutamate 494–leucine 532. A disordered region spans residues aspartate 116–threonine 150. Basic residues predominate over residues glycine 130 to arginine 140. The Nuclear localization signal motif lies at serine 789–aspartate 796. 6 HEAT repeats span residues serine 821 to alanine 859, glycine 878 to threonine 916, alanine 917 to valine 954, tryptophan 956 to proline 992, glutamine 1053 to glutamine 1091, and lysine 1138 to asparagine 1179. 2 disordered regions span residues methionine 1210–arginine 1237 and valine 1265–serine 1314.

Component of the condensin-2 complex. Present in buds.

The protein resides in the nucleus. It is found in the chromosome. Its function is as follows. Regulatory subunit of the condensin-2 complex, a complex which establishes mitotic chromosome architecture and is involved in physical rigidity of the chromatid axis. May promote the resolution of double-strand DNA catenanes (intertwines) between sister chromatids. Required for plant vigor, fertility, chromatin condensation and sister chromatid cohesion both during mitosis and meiosis. Necessary to maintain normal structural integrity of the meiotic chromosomes during the two nuclear divisions of gametogenesis, especially to prevent interchromosome connections at metaphase I. Seems also involved in crossover formation during meiotic prophase I. Prevents centromeric and pericentromeric heterochromatin repeats association. In Arabidopsis thaliana (Mouse-ear cress), this protein is Condensin-2 complex subunit CAP-D3.